We begin with the raw amino-acid sequence, 144 residues long: Major allergen Blo t 12 (144 aa).

A signal peptide spans 1–20 (MKSVLIFLVAIALFSANIVS). The segment at 24-77 (QTTRGRHTEPDDHHEKPTTQCTHEETTSTQHHHEEVVTTQTPHHEEKTTTEETH) is disordered. Residues 92–144 (HVVCHEEGPIHIQEMCNKYIICSKSGSLWYITVMPCSIGTKFDPISRNCVLDN) form the Chitin-binding type-2 domain. Cysteines 127 and 140 form a disulfide.

The sequence is that of Major allergen Blo t 12 from Blomia tropicalis (Mite).